A 94-amino-acid polypeptide reads, in one-letter code: MITRNDVEYVANLARLTLTEEEIEKMTKELGAIIEFANKLSELNTEGIEPTAHVLNIYNVFRSDEVKPSYPREEILKNAPSHDDVCIKVPKIVE.

Belongs to the GatC family. As to quaternary structure, heterotrimer of A, B and C subunits.

The catalysed reaction is L-glutamyl-tRNA(Gln) + L-glutamine + ATP + H2O = L-glutaminyl-tRNA(Gln) + L-glutamate + ADP + phosphate + H(+). It catalyses the reaction L-aspartyl-tRNA(Asn) + L-glutamine + ATP + H2O = L-asparaginyl-tRNA(Asn) + L-glutamate + ADP + phosphate + 2 H(+). In terms of biological role, allows the formation of correctly charged Asn-tRNA(Asn) or Gln-tRNA(Gln) through the transamidation of misacylated Asp-tRNA(Asn) or Glu-tRNA(Gln) in organisms which lack either or both of asparaginyl-tRNA or glutaminyl-tRNA synthetases. The reaction takes place in the presence of glutamine and ATP through an activated phospho-Asp-tRNA(Asn) or phospho-Glu-tRNA(Gln). The chain is Aspartyl/glutamyl-tRNA(Asn/Gln) amidotransferase subunit C from Caldicellulosiruptor bescii (strain ATCC BAA-1888 / DSM 6725 / KCTC 15123 / Z-1320) (Anaerocellum thermophilum).